The sequence spans 256 residues: MKRAYAMPLTNPSFPPGPYRFFDREYIIITYRTTREALEAVVPAPLEIDEPLVKYEFIRMPDSTGFGDYTETGQVIPVKYKGQHGGYVHSMYLDDDAPIAGGRELWGFPKKLANPKIVHEGEVIVGTLHYGSVLCATGTMGYKHREADHDSVLASLAAPNFLIKIIPHVDGGPRICELVRYYLTDITLKEAWTAPAALDLRPHVMADVAKLPVLDIISAVHFKADLTLGLGEVVHDYLSDHNRLATSTTQPEKIRA.

The active-site Schiff-base intermediate with acetoacetate is the Lys110.

Belongs to the ADC family.

The enzyme catalyses acetoacetate + H(+) = acetone + CO2. Its function is as follows. Catalyzes the conversion of acetoacetate to acetone and carbon dioxide. The protein is Acetoacetate decarboxylase 3 of Mesorhizobium japonicum (strain LMG 29417 / CECT 9101 / MAFF 303099) (Mesorhizobium loti (strain MAFF 303099)).